The chain runs to 290 residues: L-cysteine S-thiosulfotransferase subunit SoxA (290 aa).

The signal sequence occupies residues 1 to 26 (MPRFTKTKGTLAATALGLALAGAAFA). Zn(2+)-binding residues include Asp-78 and Asp-81. The region spanning 78–171 (DDFDNPAMVF…DMLSLISLQS (94 aa)) is the Cytochrome c domain. The heme c site is built by Cys-106, Cys-109, His-110, and Cys-143. His-190 is a binding site for Zn(2+). Heme c contacts are provided by Cys-206, Cys-209, and His-210. Arg-247 contributes to the substrate binding site. Residue Cys-251 participates in heme c binding. Cys-251 (cysteine persulfide intermediate) is an active-site residue. Residue Asp-266 participates in Zn(2+) binding.

The protein belongs to the SoxA family. As to quaternary structure, heterodimer of SoxA and SoxX. Heme c is required as a cofactor. It depends on Zn(2+) as a cofactor. Cysteine persulfide at Cys-251.

Its subcellular location is the periplasm. The enzyme catalyses L-cysteinyl-[SoxY protein] + thiosulfate + 2 Fe(III)-[cytochrome c] = S-sulfosulfanyl-L-cysteinyl-[SoxY protein] + 2 Fe(II)-[cytochrome c] + 2 H(+). It carries out the reaction S-sulfanyl-L-cysteinyl-[SoxY protein] + thiosulfate + 2 Fe(III)-[cytochrome c] = S-(2-sulfodisulfanyl)-L-cysteinyl-[SoxY protein] + 2 Fe(II)-[cytochrome c] + 2 H(+). Functionally, C-type diheme cytochrome, which is part of the SoxAX cytochrome complex involved in sulfur oxidation. The SoxAX complex catalyzes the formation of a heterodisulfide bond between the conserved cysteine residue on a sulfur carrier SoxYZ complex subunit SoxY and thiosulfate or other inorganic sulfur substrates. This leads to the liberation of two electrons, which may be transferred from the SoxAX complex to another cytochrome c that then channels them into the respiratory electron transport chain. Some electrons may be used for reductive CO(2) fixation. The protein is L-cysteine S-thiosulfotransferase subunit SoxA of Paracoccus pantotrophus (Thiosphaera pantotropha).